The primary structure comprises 316 residues: Cell surface superoxide dismutase [Cu-Zn] 6 (316 aa).

The first 18 residues, 1–18, serve as a signal peptide directing secretion; sequence MIFIPIIILIYLVSIAAS. The Cu cation site is built by His78, His80, and His96. Zn(2+) contacts are provided by His96 and Asp119. An N-linked (GlcNAc...) asparagine glycan is attached at Asn128. His159 is a binding site for Cu cation. 2 N-linked (GlcNAc...) asparagine glycosylation sites follow: Asn162 and Asn240. The tract at residues 243–263 is disordered; that stretch reads DNVYSPEETRPSDQNKKSHRH. The segment covering 249 to 258 has biased composition (basic and acidic residues); sequence EETRPSDQNK. N-linked (GlcNAc...) asparagine glycans are attached at residues Asn278 and Asn281. A lipid anchor (GPI-anchor amidated serine) is attached at Ser288. The propeptide at 289–316 is removed in mature form; sequence SDCLNDGMMVTGSVFGSLVLGIAAGIFV.

Belongs to the Cu-Zn superoxide dismutase family. Cu cation is required as a cofactor. Zn(2+) serves as cofactor. The GPI-anchor is attached to the protein in the endoplasmic reticulum and serves to target the protein to the cell surface. There, the glucosamine-inositol phospholipid moiety is cleaved off and the GPI-modified mannoprotein is covalently attached via its lipidless GPI glycan remnant to the 1,6-beta-glucan of the outer cell wall layer.

It is found in the secreted. The protein resides in the cell wall. It localises to the membrane. It carries out the reaction 2 superoxide + 2 H(+) = H2O2 + O2. Functionally, superoxide dismutases serve to convert damaging superoxide radicals, a key form of ROS, to less damaging hydrogen peroxide that can be converted into water by catalase action. May be involved protection against extracellular stress. This Candida albicans (strain SC5314 / ATCC MYA-2876) (Yeast) protein is Cell surface superoxide dismutase [Cu-Zn] 6 (SOD6).